The following is a 760-amino-acid chain: Protein P1 (760 aa).

The N-terminal stretch at 1–33 (MASFLKPVNSQGLWLSLLLAITYLFLLPSAGQS) is a signal peptide. 4 helical membrane-spanning segments follow: residues 172 to 192 (LIEFVLVSWSLWLCSVLVYVA), 194 to 214 (AVPGKFLLYMAAFCTTFWAWP), 218 to 235 (ASSLIRIVTTPLTLIGFL), and 240 to 260 (IGLISHCLALTWNMFMTWSLL). The 198-residue stretch at 318-515 (IPGVQIKKLR…SSSPKFTGCE (198 aa)) folds into the Peptidase S39 domain. Active-site for protease activity residues include His-366, Asp-396, and Ser-465. 2 disordered regions span residues 572-672 (GLWA…LSQV) and 684-760 (LTVQ…PRRN). Residues 621-643 (RAEKVRHVRRSEMTPEQKRADNL) show a composition bias toward basic and acidic residues.

This sequence belongs to the peptidase S39B family. In terms of processing, specific enzymatic cleavages in vivo yield mature proteins. The protease probably cleaves itself and releases the VPg protein.

It localises to the membrane. In terms of biological role, precursor from which the VPg molecule is probably released at the onset of the RNA synthesis. Essential for virus replication. The chain is Protein P1 from Pea enation mosaic virus-1 (strain WSG) (PEMV-1).